The chain runs to 133 residues: UPF0102 protein ABSDF1354 (133 aa).

It belongs to the UPF0102 family.

The polypeptide is UPF0102 protein ABSDF1354 (Acinetobacter baumannii (strain SDF)).